The chain runs to 125 residues: Small ribosomal subunit protein eS8 (125 aa).

The protein belongs to the eukaryotic ribosomal protein eS8 family. As to quaternary structure, part of the 30S ribosomal subunit.

The polypeptide is Small ribosomal subunit protein eS8 (Methanosarcina barkeri (strain Fusaro / DSM 804)).